A 101-amino-acid polypeptide reads, in one-letter code: Small ribosomal subunit protein bS18c (101 aa).

The span at Met1–Leu19 shows a compositional bias: basic residues. Residues Met1–Gly23 are disordered.

This sequence belongs to the bacterial ribosomal protein bS18 family. Part of the 30S ribosomal subunit.

The protein localises to the plastid. It localises to the chloroplast. The polypeptide is Small ribosomal subunit protein bS18c (Liriodendron tulipifera (Tuliptree)).